The chain runs to 230 residues: MAKRGKKYVEAAKLVDRAAAYSATEAVELVKKTNTAKFDATVEAAFRLGVDPKKADQQIRGAVVLPHGTGKVQRVLVFAKGEKAKEAEAAGADFVGDTDYIGKIQQGWFDFDVVVATPDMMGEVGKLGRVLGPKGLMPNPKTGTVTFDVTKAVNEIKAGKVEYRVDKAGNIHVPIGKVSFEDAKLVENFKTIADTLQKVKPAAAKGTYMKNVTVASTMGPGVRVDVSTLA.

This sequence belongs to the universal ribosomal protein uL1 family. In terms of assembly, part of the 50S ribosomal subunit.

Binds directly to 23S rRNA. The L1 stalk is quite mobile in the ribosome, and is involved in E site tRNA release. In terms of biological role, protein L1 is also a translational repressor protein, it controls the translation of the L11 operon by binding to its mRNA. The polypeptide is Large ribosomal subunit protein uL1 (Bacillus cereus (strain B4264)).